A 210-amino-acid polypeptide reads, in one-letter code: 7-cyano-7-deazaguanine synthase 2 (210 aa).

10–20 is a binding site for ATP; the sequence is HSGGMDSTTCL. Positions 180, 193, 196, and 199 each coordinate Zn(2+).

Belongs to the QueC family. Zn(2+) is required as a cofactor.

It catalyses the reaction 7-carboxy-7-deazaguanine + NH4(+) + ATP = 7-cyano-7-deazaguanine + ADP + phosphate + H2O + H(+). It participates in purine metabolism; 7-cyano-7-deazaguanine biosynthesis. Functionally, catalyzes the ATP-dependent conversion of 7-carboxy-7-deazaguanine (CDG) to 7-cyano-7-deazaguanine (preQ(0)). This Rhodopseudomonas palustris (strain HaA2) protein is 7-cyano-7-deazaguanine synthase 2.